The sequence spans 375 residues: MTDVELRVEALSLSGVSAIPPEYVRPEEERADLGDALELARAASDDDATARIPVVDISAFDNDGDGRHACVEAVRAAAEEWGVIHIAGHGLPGDVLGRLRAAGEAFFALPIAEKEAYANDPAAGRLQGYGSKLAANASGKREWEDYLFHLVHPDHLADHSLWPANPPEYVPVSRDFGGRVRTLASKLLAILSLGLGLPEETLERRLRGHELAGVDDDLLLQLKINYYPRCPRPDLAVGVEAHTDVSALSFILHNGVPGLQVHHAGSWVTARPEPGTIVVHVGDALEILTNGRYTSVLHRGLVSRDAVRLSWVVFCEPPPESVLLQPVPELLADGADKPLFAPRTFKQHVQRKLFEKLKDQQDNNAAAASNGMRTK.

Positions leucine 218–proline 317 constitute a Fe2OG dioxygenase domain. Histidine 242, aspartate 244, and histidine 298 together coordinate Fe cation. Arginine 308 is a 2-oxoglutarate binding site.

It belongs to the iron/ascorbate-dependent oxidoreductase family. Requires L-ascorbate as cofactor. It depends on Fe(2+) as a cofactor.

The enzyme catalyses a (2R,3S,4S)-leucoanthocyanidin + 2-oxoglutarate + O2 = a 4-H-anthocyanidin with a 3-hydroxy group + succinate + CO2 + 2 H2O. It functions in the pathway pigment biosynthesis; anthocyanin biosynthesis. Involved in anthocyanin and protoanthocyanidin biosynthesis by catalyzing the oxidation of leucoanthocyanidins into anthocyanidins. The sequence is that of Leucoanthocyanidin dioxygenase 1 from Oryza sativa subsp. japonica (Rice).